We begin with the raw amino-acid sequence, 84 residues long: uncharacterized protein (84 aa).

The segment at Met-1–Ser-21 is disordered. Residues Tyr-49–Lys-69 form a helical membrane-spanning segment.

It is found in the membrane. This is an uncharacterized protein from Invertebrate iridescent virus 6 (IIV-6).